The sequence spans 82 residues: Cytotoxin 10 (82 aa).

An N-terminal signal peptide occupies residues 1–22; sequence MKTLLLTLVVVVTIVCLDLGYT. 4 cysteine pairs are disulfide-bonded: cysteine 25/cysteine 43, cysteine 36/cysteine 60, cysteine 64/cysteine 75, and cysteine 76/cysteine 81.

The protein belongs to the three-finger toxin family. Short-chain subfamily. Type IA cytotoxin sub-subfamily. In terms of assembly, monomer in solution; Homodimer and oligomer in the presence of negatively charged lipids forming a pore with a size ranging between 20 and 30 Angstroms. In terms of tissue distribution, expressed by the venom gland.

Its subcellular location is the secreted. The protein resides in the target cell membrane. Shows cytolytic activity on many different cells by forming pore in lipid membranes. In vivo, increases heart rate or kills the animal by cardiac arrest. In addition, it binds to heparin with high affinity, interacts with Kv channel-interacting protein 1 (KCNIP1) in a calcium-independent manner, and binds to integrin alpha-V/beta-3 (ITGAV/ITGB3) with moderate affinity. The polypeptide is Cytotoxin 10 (Naja atra (Chinese cobra)).